The primary structure comprises 324 residues: MQSMNVAQLIEQKICLAIMGPTASGKSGLTMALAKHLPIEIISVDSALIYRGMDIGTAKPTLDEQVAVPHHLIDILDPTESYSAADFVEDVHELVKEIFARGNLPVLAGGTMMYFNALQQGMAKLPSADEAIRAKIHQAWQANPAAVHAQLKQVDPEAAERIHQNDPQRLIRALEVYEMTGKPLTQLQREGQQEGLTEFKLAKVALIPEDRKKLHEQIAVRFHEMLNNGFLKEAEKVFSLDGLSADLPAIRSVGYRQAWLFFAQEYDYDTFVEKSIVATRQLAKRQITWLRKEQDLLVLDPFKTNVDDRVEAVLDYLSALTKNA.

ATP is bound at residue 20-27; that stretch reads GPTASGKS. 22-27 is a binding site for substrate; sequence TASGKS. 3 interaction with substrate tRNA regions span residues 45–48, 168–172, and 284–291; these read DSAL, QRLIR, and KRQITWLR.

Belongs to the IPP transferase family. In terms of assembly, monomer. The cofactor is Mg(2+).

It catalyses the reaction adenosine(37) in tRNA + dimethylallyl diphosphate = N(6)-dimethylallyladenosine(37) in tRNA + diphosphate. Functionally, catalyzes the transfer of a dimethylallyl group onto the adenine at position 37 in tRNAs that read codons beginning with uridine, leading to the formation of N6-(dimethylallyl)adenosine (i(6)A). This Hydrogenovibrio crunogenus (strain DSM 25203 / XCL-2) (Thiomicrospira crunogena) protein is tRNA dimethylallyltransferase.